Consider the following 299-residue polypeptide: Regucalcin (299 aa).

Position 18 (E18) interacts with a divalent metal cation. The substrate site is built by R101, N103, and E121. An N6-succinyllysine modification is found at K144. Residues N154 and D204 each coordinate a divalent metal cation. D204 acts as the Proton donor/acceptor in catalysis. K244 and K253 each carry N6-succinyllysine.

Belongs to the SMP-30/CGR1 family. In terms of assembly, monomer. It depends on Zn(2+) as a cofactor. Requires Mn(2+) as cofactor. Ca(2+) is required as a cofactor. The cofactor is Mg(2+).

The protein resides in the cytoplasm. The enzyme catalyses D-glucono-1,5-lactone + H2O = D-gluconate + H(+). Gluconolactonase with low activity towards other sugar lactones, including gulonolactone and galactonolactone. Can also hydrolyze diisopropyl phosphorofluoridate and phenylacetate (in vitro). Calcium-binding protein. Modulates Ca(2+) signaling, and Ca(2+)-dependent cellular processes and enzyme activities. This Macaca fascicularis (Crab-eating macaque) protein is Regucalcin (RGN).